Reading from the N-terminus, the 150-residue chain is MSAKDERAREILRGFKLNWMNLRDAETGKILWQGTEDLSVPGVEHEARVPKKILKCKAVSRELNFSSAEQMEKFRLEQKVYFKGQCLEEWFFEFGFVIPNSTNTWQSLIEAAPESQMMPASVLTGNVIIETKFFDDDLLVSTSRVRLFYV.

A required for association with membranes region spans residues 144 to 150; it reads RVRLFYV.

It belongs to the PDE6D/unc-119 family. In terms of assembly, interacts with the prenylated catalytic subunits of PDE6, an oligomer composed of two catalytic chains (PDE6A and PDE6B) and two inhibitory chains (gamma); has no effect on enzyme activity but promotes the release of the prenylated enzyme from cell membrane. Interacts with prenylated GRK1 and GRK7. Interacts with prenylated INPP5E. Interacts with prenylated Ras family members, including HRAS, KRAS, NRAS, RAP2A, RAP2C and RHEB. Interacts with RAB13 (prenylated form); dissociates RAB13 from membranes. Interacts with RAB28 (prenylated form); the interaction promotes RAB28 delivery to the photoreceptor outer segments. Interacts with RPGR. Interacts with ARL2. Interacts with ARL3; the interaction occurs specifically with the GTP-bound form of ARL3. Interaction with ARL2 and ARL3 promotes release of farnesylated cargo proteins. In terms of tissue distribution, detected in retina photoreceptor cells, especially in rods (at protein level). Detected in retina, brain and adrenal gland.

The protein resides in the cytoplasm. The protein localises to the cytosol. It localises to the cytoplasmic vesicle membrane. Its subcellular location is the cytoskeleton. It is found in the cilium basal body. Functionally, promotes the release of prenylated target proteins from cellular membranes. Modulates the activity of prenylated or palmitoylated Ras family members by regulating their subcellular location. Required for normal ciliary targeting of farnesylated target proteins, such as INPP5E. Modulates the subcellular location of target proteins by acting as a GTP specific dissociation inhibitor (GDI). Required for RAB28 localization to the cone cell outer segments in the retina. Increases the affinity of ARL3 for GTP by several orders of magnitude. Stabilizes ARL3-GTP by decreasing the nucleotide dissociation rate. The polypeptide is Retinal rod rhodopsin-sensitive cGMP 3',5'-cyclic phosphodiesterase subunit delta (PDE6D) (Bos taurus (Bovine)).